Reading from the N-terminus, the 313-residue chain is Ribosomal RNA small subunit methyltransferase H (313 aa).

S-adenosyl-L-methionine contacts are provided by residues 35 to 37 (GGH), Asp55, Phe81, Asp103, and Gln110.

It belongs to the methyltransferase superfamily. RsmH family.

The protein resides in the cytoplasm. The enzyme catalyses cytidine(1402) in 16S rRNA + S-adenosyl-L-methionine = N(4)-methylcytidine(1402) in 16S rRNA + S-adenosyl-L-homocysteine + H(+). Specifically methylates the N4 position of cytidine in position 1402 (C1402) of 16S rRNA. The protein is Ribosomal RNA small subunit methyltransferase H of Pseudomonas syringae pv. syringae (strain B728a).